The chain runs to 199 residues: Thymidylate kinase (199 aa).

7-14 (GIDGSGKS) lines the ATP pocket.

The protein belongs to the thymidylate kinase family.

The enzyme catalyses dTMP + ATP = dTDP + ADP. Its function is as follows. Phosphorylation of dTMP to form dTDP in both de novo and salvage pathways of dTTP synthesis. In Neorickettsia sennetsu (strain ATCC VR-367 / Miyayama) (Ehrlichia sennetsu), this protein is Thymidylate kinase.